We begin with the raw amino-acid sequence, 197 residues long: Ion-translocating oxidoreductase complex subunit B (197 aa).

Positions 1 to 26 are hydrophobic; the sequence is MSTILIAIIALAALAAVFGAILGFAS. The region spanning 32–90 is the 4Fe-4S domain; sequence EADPIVDQIDSILPQTQCGQCGYPGCRPYAEAIANGDQINKCPPGGQATIEKLADLMGV. The [4Fe-4S] cluster site is built by C49, C52, C57, C73, C114, C117, C120, C124, C144, C147, C150, and C154. 2 4Fe-4S ferredoxin-type domains span residues 105–134 and 135–164; these read TVAF…GGTK and ALHT…MIPV.

The protein belongs to the 4Fe4S bacterial-type ferredoxin family. RnfB subfamily. The complex is composed of six subunits: RnfA, RnfB, RnfC, RnfD, RnfE and RnfG. Requires [4Fe-4S] cluster as cofactor.

Its subcellular location is the cell inner membrane. Functionally, part of a membrane-bound complex that couples electron transfer with translocation of ions across the membrane. The protein is Ion-translocating oxidoreductase complex subunit B of Vibrio campbellii (strain ATCC BAA-1116).